An 845-amino-acid chain; its full sequence is Translation initiation factor IF-2 (845 aa).

Disordered stretches follow at residues 44-91 and 119-256; these read KRRK…NLSS and ARRA…NQEP. A compositionally biased stretch (basic and acidic residues) spans 119–129; that stretch reads ARRAKEREESL. The segment covering 139 to 148 has biased composition (acidic residues); sequence DETPQEEEEP. Residues 156–165 are compositionally biased toward polar residues; the sequence is SLSPAQSQIE. Basic and acidic residues-rich tracts occupy residues 179-194 and 202-217; these read IEKRKADETKEDDRNS and SEVRAPKVLKGADEKR. The tr-type G domain maps to 343–510; sequence LRPPVVTIMG…AILLQAEILD (168 aa). Residues 352–359 form a G1 region; that stretch reads GHVDHGKT. 352–359 contacts GTP; it reads GHVDHGKT. A G2 region spans residues 377–381; the sequence is GITQH. The segment at 398-401 is G3; sequence DTPG. GTP is bound by residues 398 to 402 and 452 to 455; these read DTPGH and NKID. Residues 452–455 form a G4 region; it reads NKID. The segment at 488-490 is G5; sequence SAK.

It belongs to the TRAFAC class translation factor GTPase superfamily. Classic translation factor GTPase family. IF-2 subfamily.

The protein localises to the cytoplasm. Functionally, one of the essential components for the initiation of protein synthesis. Protects formylmethionyl-tRNA from spontaneous hydrolysis and promotes its binding to the 30S ribosomal subunits. Also involved in the hydrolysis of GTP during the formation of the 70S ribosomal complex. In Bartonella henselae (strain ATCC 49882 / DSM 28221 / CCUG 30454 / Houston 1) (Rochalimaea henselae), this protein is Translation initiation factor IF-2.